A 757-amino-acid polypeptide reads, in one-letter code: Probable inorganic carbon transporter subunit DabA (757 aa).

4 residues coordinate Zn(2+): Cys321, Asp323, His475, and Cys490.

It belongs to the inorganic carbon transporter (TC 9.A.2) DabA family. In terms of assembly, forms a complex with DabB. Requires Zn(2+) as cofactor.

The protein localises to the cell inner membrane. Functionally, part of an energy-coupled inorganic carbon pump. The sequence is that of Probable inorganic carbon transporter subunit DabA from Idiomarina loihiensis (strain ATCC BAA-735 / DSM 15497 / L2-TR).